A 95-amino-acid chain; its full sequence is Large ribosomal subunit protein uL23 (95 aa).

The protein belongs to the universal ribosomal protein uL23 family. As to quaternary structure, part of the 50S ribosomal subunit. Contacts protein L29, and trigger factor when it is bound to the ribosome.

Its function is as follows. One of the early assembly proteins it binds 23S rRNA. One of the proteins that surrounds the polypeptide exit tunnel on the outside of the ribosome. Forms the main docking site for trigger factor binding to the ribosome. This is Large ribosomal subunit protein uL23 from Rubrobacter xylanophilus (strain DSM 9941 / JCM 11954 / NBRC 16129 / PRD-1).